The sequence spans 321 residues: Nod factor export ATP-binding protein I (321 aa).

The ABC transporter domain occupies 17-247; that stretch reads LSVEGLRKRY…EIGCDVVEVY (231 aa). 49–56 serves as a coordination point for ATP; the sequence is GPNGAGKT.

It belongs to the ABC transporter superfamily. Lipooligosaccharide exporter (TC 3.A.1.102) family. The complex is composed of two ATP-binding proteins (NodI) and two transmembrane proteins (NodJ).

It is found in the cell inner membrane. In terms of biological role, part of the ABC transporter complex NodIJ involved in the export of the nodulation factors (Nod factors), the bacterial signal molecules that induce symbiosis and subsequent nodulation induction. Nod factors are LCO (lipo-chitin oligosaccharide), a modified beta-1,4-linked N-acetylglucosamine oligosaccharide. This subunit is responsible for energy coupling to the transport system. This Ralstonia nicotianae (strain ATCC BAA-1114 / GMI1000) (Ralstonia solanacearum) protein is Nod factor export ATP-binding protein I.